A 99-amino-acid chain; its full sequence is Small ribosomal subunit protein bS6 (99 aa).

This sequence belongs to the bacterial ribosomal protein bS6 family.

Its function is as follows. Binds together with bS18 to 16S ribosomal RNA. The sequence is that of Small ribosomal subunit protein bS6 from Lactiplantibacillus plantarum (strain ATCC BAA-793 / NCIMB 8826 / WCFS1) (Lactobacillus plantarum).